The chain runs to 478 residues: Zinc finger C3HC-type protein 1-like (478 aa).

The C3HC-type zinc finger occupies 93-147; it reads CAKYGWSNIECDMLKCSSCNAYLCASLQPVLDFSKYKQRCVELQEALRKAHEKFC. Residues 285–389 form a disordered region; sequence LSAPNTPVSP…SSSSDTSPRG (105 aa). Polar residues predominate over residues 351-363; that stretch reads SMGQGESSGLSNE. Low complexity predominate over residues 377-388; it reads LCSSSSSDTSPR.

Phosphorylated. May also be weakly phosphorylated on Tyr residues.

It is found in the nucleus. The protein localises to the nucleus envelope. Functionally, required for proper positioning of a substantial amount of TPR at the nuclear basket (NB) through interaction with TPR. In Xenopus tropicalis (Western clawed frog), this protein is Zinc finger C3HC-type protein 1-like (zc3hc1).